Consider the following 1298-residue polypeptide: Phosphoribosylformylglycinamidine synthase (1298 aa).

Residues 301–328 are disordered; the sequence is APFPGASTGSGGEIRDEGATGRGAKPKA. Residues 305–316, 384–386, and A676 each bind ATP; these read GASTGSGGEIRD and TGY. Residues D677, E716, N720, and D884 each coordinate Mg(2+). ATP is bound at residue S886. Residues 1045–1298 enclose the Glutamine amidotransferase type-1 domain; that stretch reads VAVLREQGVN…MFRNARVWVN (254 aa). C1138 (nucleophile) is an active-site residue. Active-site residues include H1263 and E1265.

In the N-terminal section; belongs to the FGAMS family. As to quaternary structure, monomer.

Its subcellular location is the cytoplasm. It catalyses the reaction N(2)-formyl-N(1)-(5-phospho-beta-D-ribosyl)glycinamide + L-glutamine + ATP + H2O = 2-formamido-N(1)-(5-O-phospho-beta-D-ribosyl)acetamidine + L-glutamate + ADP + phosphate + H(+). Its pathway is purine metabolism; IMP biosynthesis via de novo pathway; 5-amino-1-(5-phospho-D-ribosyl)imidazole from N(2)-formyl-N(1)-(5-phospho-D-ribosyl)glycinamide: step 1/2. Phosphoribosylformylglycinamidine synthase involved in the purines biosynthetic pathway. Catalyzes the ATP-dependent conversion of formylglycinamide ribonucleotide (FGAR) and glutamine to yield formylglycinamidine ribonucleotide (FGAM) and glutamate. This Pseudomonas fluorescens (strain Pf0-1) protein is Phosphoribosylformylglycinamidine synthase.